The following is a 984-amino-acid chain: Vacuolar sorting protein 3 (984 aa).

Residues 21–339 (KIRALSLSPI…GCGPSLLAAD (319 aa)) form the CNH domain. The stretch at 663–844 (VLTSDKRTEE…YLDPQNGKEP (182 aa)) is one CHCR repeat.

Belongs to the TRAP1 family. In terms of assembly, component of the class C core vacuole/endosome tethering (CORVET) complex. Their common core is composed of the class C Vps core proteins VPS11, VCL1, VPS18 and VPS33, which in CORVET further associates with VPS3. Interacts directly with VPS11. Binds to RABF2A and RABF2B.

It localises to the endosome membrane. It is found in the cytoplasm. Functionally, essential protein required during embryogenesis. Believed to act as a component of the putative class C core vacuole/endosome tethering (CORVET) endosomal tethering complexes. CORVET is required for vacuolar transport of SYP22. Involved in root development. Plays a role in vesicle-mediated protein trafficking of the endocytic membrane transport pathway. This is Vacuolar sorting protein 3 from Arabidopsis thaliana (Mouse-ear cress).